The chain runs to 224 residues: Ribose-5-phosphate isomerase A (224 aa).

Residues 34–37 (TGST), 87–90 (DGAD), and 100–103 (KGGG) contribute to the substrate site. Glutamate 109 functions as the Proton acceptor in the catalytic mechanism. Lysine 127 is a substrate binding site.

The protein belongs to the ribose 5-phosphate isomerase family. As to quaternary structure, homodimer.

It catalyses the reaction aldehydo-D-ribose 5-phosphate = D-ribulose 5-phosphate. The protein operates within carbohydrate degradation; pentose phosphate pathway; D-ribose 5-phosphate from D-ribulose 5-phosphate (non-oxidative stage): step 1/1. Catalyzes the reversible conversion of ribose-5-phosphate to ribulose 5-phosphate. The chain is Ribose-5-phosphate isomerase A from Francisella tularensis subsp. novicida (strain U112).